Here is a 530-residue protein sequence, read N- to C-terminus: UDP-glucuronosyltransferase 2B15 (530 aa).

The N-terminal stretch at 1–23 (MSGKWISALLLLQISFCFKSGNC) is a signal peptide. Asparagine 316 carries an N-linked (GlcNAc...) asparagine glycan. A helical transmembrane segment spans residues 494–510 (VIGFLLSCVAVTVVLAL).

Belongs to the UDP-glycosyltransferase family. Post-translationally, N-glycosylated. Liver. Lower levels seen in the kidney and testis.

It localises to the endoplasmic reticulum membrane. It catalyses the reaction glucuronate acceptor + UDP-alpha-D-glucuronate = acceptor beta-D-glucuronoside + UDP + H(+). The enzyme catalyses 17alpha-estradiol + UDP-alpha-D-glucuronate = 17alpha-estradiol 3-O-(beta-D-glucuronate) + UDP + H(+). The catalysed reaction is 16alpha,17alpha-estriol + UDP-alpha-D-glucuronate = 16alpha,17alpha-estriol 3-O-(beta-D-glucuronate) + UDP + H(+). It carries out the reaction 17beta-hydroxy-5alpha-androstan-3-one + UDP-alpha-D-glucuronate = 5alpha-dihydrotestosterone 17-O-(beta-D-glucuronate) + UDP + H(+). UDP-glucuronosyltransferase (UGT) that catalyzes phase II biotransformation reactions in which lipophilic substrates are conjugated with glucuronic acid to increase the metabolite's water solubility, thereby facilitating excretion into either the urine or bile. Essential for the elimination and detoxification of drugs, xenobiotics and endogenous compounds. Catalyzes the glucuronidation of endogenous steroid hormones such as androgens (testosterone, androsterone) and estrogens (estradiol, epiestradiol, estriol, catechol estrogens). Displays glucuronidation activity toward several classes of xenoblotic substrates, including phenolic compounds (eugenol, 4-nitrophenol, 4-hydroxybiphenyl) and phenylpropanoids (naringenin, coumarins). Catalyzes the glucuronidation of monoterpenoid alcohols such as borneol, menthol and isomenthol, a class of natural compounds used in essential oils. This Rattus norvegicus (Rat) protein is UDP-glucuronosyltransferase 2B15.